The following is a 217-amino-acid chain: 3,4-dihydroxy-2-butanone 4-phosphate synthase (217 aa).

D-ribulose 5-phosphate contacts are provided by residues 37 to 38 (RE), D42, 150 to 154 (RGGHT), and E174. A Mg(2+)-binding site is contributed by E38. Position 153 (H153) interacts with Mg(2+).

Belongs to the DHBP synthase family. As to quaternary structure, homodimer. Requires Mg(2+) as cofactor. Mn(2+) is required as a cofactor.

The enzyme catalyses D-ribulose 5-phosphate = (2S)-2-hydroxy-3-oxobutyl phosphate + formate + H(+). The protein operates within cofactor biosynthesis; riboflavin biosynthesis; 2-hydroxy-3-oxobutyl phosphate from D-ribulose 5-phosphate: step 1/1. In terms of biological role, catalyzes the conversion of D-ribulose 5-phosphate to formate and 3,4-dihydroxy-2-butanone 4-phosphate. The protein is 3,4-dihydroxy-2-butanone 4-phosphate synthase of Shigella boydii serotype 18 (strain CDC 3083-94 / BS512).